Reading from the N-terminus, the 1086-residue chain is Transcription initiation factor TFIID subunit 2 (1086 aa).

The span at 1–11 (MDFSEASTSGD) shows a compositional bias: polar residues. 2 disordered regions span residues 1–53 (MDFS…PPPV) and 1064–1086 (GYEA…NLMQ). Pro residues-rich tracts occupy residues 19–36 (PFPP…PPLA) and 44–53 (APPPLQPPPV). The segment covering 1067 to 1078 (AARRSPPRRDFG) has biased composition (basic and acidic residues).

The protein belongs to the TAF2 family. Component of the TFIID basal transcription factor complex, composed of TATA-box-binding protein tbp-1, and a number of TBP-associated factors (TAFs).

It localises to the nucleus. In terms of biological role, the TFIID basal transcription factor complex plays a major role in the initiation of RNA polymerase II (Pol II)-dependent transcription. TFIID recognizes and binds promoters via its subunit tbp-1, a TATA-box-binding protein, and promotes assembly of the pre-initiation complex (PIC). The TFIID complex consists of tbp-1 and TBP-associated factors (TAFs), including taf-2. May regulate RNA polymerase II activity and thereby may control transcription initiation by RNA polymerase II. This Caenorhabditis elegans protein is Transcription initiation factor TFIID subunit 2.